The chain runs to 323 residues: uncharacterized protein (323 aa).

3 consecutive transmembrane segments (helical) span residues 8–28 (FLVI…MFME), 32–52 (LTLL…PFSL), and 92–112 (ITIF…CGIF).

It localises to the mitochondrion membrane. This is an uncharacterized protein from Neurospora crassa (strain ATCC 24698 / 74-OR23-1A / CBS 708.71 / DSM 1257 / FGSC 987).